Reading from the N-terminus, the 347-residue chain is N-acetyl-gamma-glutamyl-phosphate reductase (347 aa).

The active site involves cysteine 150.

It belongs to the NAGSA dehydrogenase family. Type 1 subfamily.

The protein localises to the cytoplasm. The enzyme catalyses N-acetyl-L-glutamate 5-semialdehyde + phosphate + NADP(+) = N-acetyl-L-glutamyl 5-phosphate + NADPH + H(+). It participates in amino-acid biosynthesis; L-arginine biosynthesis; N(2)-acetyl-L-ornithine from L-glutamate: step 3/4. Its function is as follows. Catalyzes the NADPH-dependent reduction of N-acetyl-5-glutamyl phosphate to yield N-acetyl-L-glutamate 5-semialdehyde. The polypeptide is N-acetyl-gamma-glutamyl-phosphate reductase (Leifsonia xyli subsp. xyli (strain CTCB07)).